Reading from the N-terminus, the 156-residue chain is Small ribosomal subunit protein uS7 (156 aa).

The protein belongs to the universal ribosomal protein uS7 family. As to quaternary structure, part of the 30S ribosomal subunit. Contacts proteins S9 and S11.

One of the primary rRNA binding proteins, it binds directly to 16S rRNA where it nucleates assembly of the head domain of the 30S subunit. Is located at the subunit interface close to the decoding center, probably blocks exit of the E-site tRNA. This Methylorubrum extorquens (strain CM4 / NCIMB 13688) (Methylobacterium extorquens) protein is Small ribosomal subunit protein uS7.